We begin with the raw amino-acid sequence, 394 residues long: MSTVQQITVLGATGSIGLSTLDVIARHPERYAVFALSGFSRLAELETLCVQHRPRYVVVPDAAAAHALQGSLRAAALPTEVLVGEEGLCAVAGHGEVDCVMAAIVGAAGLRPTLAAVQAGKKVLLANKEALVMSGALFMQAVRESGATLLPIDSEHNAIFQCLPGDYGRGLQAVGVRRVLLTASGGPFRETPLAELERVTPEQACAHPNWSMGRKISVDSASMMNKGLELIEACWLFDARPEQIEVVIHRQSVIHSLVDYVDGSVLAQLGNPDMRTPIAHALAWPQRIDSGVSPLDLFAIGRLDFERPDEQRFPCLRLAREAAQVGGSAPAMLNAANEVAVDAFLQRRIRFSDIARMIEFVLNAESARAVEALDAVFEADRRARALAGEWLARH.

NADPH is bound by residues threonine 13, glycine 14, serine 15, isoleucine 16, and asparagine 127. 1-deoxy-D-xylulose 5-phosphate is bound at residue lysine 128. NADPH is bound at residue glutamate 129. Aspartate 153 lines the Mn(2+) pocket. 1-deoxy-D-xylulose 5-phosphate-binding residues include serine 154, glutamate 155, serine 184, and histidine 207. A Mn(2+)-binding site is contributed by glutamate 155. Position 213 (glycine 213) interacts with NADPH. Serine 220, asparagine 225, lysine 226, and glutamate 229 together coordinate 1-deoxy-D-xylulose 5-phosphate. Residue glutamate 229 participates in Mn(2+) binding.

The protein belongs to the DXR family. Mg(2+) serves as cofactor. Requires Mn(2+) as cofactor.

The enzyme catalyses 2-C-methyl-D-erythritol 4-phosphate + NADP(+) = 1-deoxy-D-xylulose 5-phosphate + NADPH + H(+). It functions in the pathway isoprenoid biosynthesis; isopentenyl diphosphate biosynthesis via DXP pathway; isopentenyl diphosphate from 1-deoxy-D-xylulose 5-phosphate: step 1/6. Functionally, catalyzes the NADPH-dependent rearrangement and reduction of 1-deoxy-D-xylulose-5-phosphate (DXP) to 2-C-methyl-D-erythritol 4-phosphate (MEP). In Ectopseudomonas mendocina (strain ymp) (Pseudomonas mendocina), this protein is 1-deoxy-D-xylulose 5-phosphate reductoisomerase.